Here is a 149-residue protein sequence, read N- to C-terminus: Large ribosomal subunit protein eL19 (149 aa).

A disordered region spans residues 46–99 (EDGTIEAKTAKGNSRGRARKRQQKRAYGHKKGHGSRKGRSGGRQNEKEDWQSRI). Positions 59–85 (SRGRARKRQQKRAYGHKKGHGSRKGRS) are enriched in basic residues. Residues 89–99 (QNEKEDWQSRI) are compositionally biased toward basic and acidic residues.

The protein belongs to the eukaryotic ribosomal protein eL19 family. Part of the 50S ribosomal subunit.

In terms of biological role, binds to the 23S rRNA. This chain is Large ribosomal subunit protein eL19, found in Natronomonas pharaonis (strain ATCC 35678 / DSM 2160 / CIP 103997 / JCM 8858 / NBRC 14720 / NCIMB 2260 / Gabara) (Halobacterium pharaonis).